An 83-amino-acid chain; its full sequence is Conotoxin LiCr95 (83 aa).

The first 22 residues, 1–22, serve as a signal peptide directing secretion; that stretch reads MKLTCALIVAMLFLTACQLTTT. Residues 23 to 50 constitute a propeptide that is removed on maturation; that stretch reads DDSRGRQKYPTERLRVKMRNPKLSKLTK. Cystine bridges form between Cys52–Cys67, Cys59–Cys71, and Cys66–Cys80.

Belongs to the conotoxin O1 superfamily. As to expression, expressed by the venom duct.

Its subcellular location is the secreted. The sequence is that of Conotoxin LiCr95 from Conus lividus (Livid cone).